The following is a 257-amino-acid chain: Ribonuclease HII (257 aa).

One can recognise an RNase H type-2 domain in the interval 72 to 257; sequence TYIAGIDEVG…FAPIKDMIQK (186 aa). A divalent metal cation-binding residues include aspartate 78, glutamate 79, and aspartate 170.

Belongs to the RNase HII family. Mn(2+) serves as cofactor. Requires Mg(2+) as cofactor.

Its subcellular location is the cytoplasm. The catalysed reaction is Endonucleolytic cleavage to 5'-phosphomonoester.. In terms of biological role, endonuclease that specifically degrades the RNA of RNA-DNA hybrids. This is Ribonuclease HII from Bacillus cereus (strain B4264).